We begin with the raw amino-acid sequence, 479 residues long: Probable acyl-CoA desaturase (479 aa).

Residues Met1 to Thr18 show a composition bias toward low complexity. A disordered region spans residues Met1–Thr28. The Cytoplasmic segment spans residues Met1 to His61. Residues Leu62 to Phe82 traverse the membrane as a helical segment. Residues Thr83–Lys89 are Lumenal-facing. The helical transmembrane segment at Thr90–His110 threads the bilayer. Residues His110, His115, His147, His150, and His151 each contribute to the Fe cation site. The short motif at His110–His115 is the Histidine box-1 element. Over Arg111 to His204 the chain is Cytoplasmic. Residues His147–His151 carry the Histidine box-2 motif. The helical transmembrane segment at Phe205–Trp225 threads the bilayer. Over Gly226–Arg229 the chain is Lumenal. A helical transmembrane segment spans residues Gly230–Val250. Residues Asn251 to Asn479 are Cytoplasmic-facing. Residues His255, His284, His287, and His288 each contribute to the Fe cation site. The short motif at His284–His288 is the Histidine box-3 element. Residues Gln357–Arg433 form the Cytochrome b5 heme-binding domain. 2 residues coordinate heme: His390 and His416.

It belongs to the fatty acid desaturase type 1 family. Fe(2+) is required as a cofactor.

Its subcellular location is the membrane. It carries out the reaction octadecanoyl-CoA + 2 Fe(II)-[cytochrome b5] + O2 + 2 H(+) = (9Z)-octadecenoyl-CoA + 2 Fe(III)-[cytochrome b5] + 2 H2O. In terms of biological role, stearoyl-CoA desaturase that utilizes O(2) and electrons from reduced cytochrome b5 to introduce the first double bond into saturated fatty acyl-CoA substrates. Catalyzes the insertion of a cis double bond at the delta-9 position into fatty acyl-CoA substrates including palmitoyl-CoA and stearoyl-CoA. Contributes to the biosynthesis of membrane phospholipids, cholesterol esters and triglycerides. The protein is Probable acyl-CoA desaturase of Schizosaccharomyces pombe (strain 972 / ATCC 24843) (Fission yeast).